The following is a 369-amino-acid chain: Gibberellin 3-beta-dioxygenase 2-3 (369 aa).

The 102-residue stretch at M205 to P306 folds into the Fe2OG dioxygenase domain. The Fe cation site is built by H229, D231, and H287. R297 is an active-site residue.

This sequence belongs to the iron/ascorbate-dependent oxidoreductase family. GA3OX subfamily. The cofactor is L-ascorbate. It depends on Fe cation as a cofactor.

The catalysed reaction is gibberellin A20 + 2-oxoglutarate + O2 = gibberellin A1 + succinate + CO2. Functionally, converts the inactive gibberellin precursors GA9 and GA20 in the bioactives gibberellins GA4 and GA1. The polypeptide is Gibberellin 3-beta-dioxygenase 2-3 (GA3ox2-3) (Triticum aestivum (Wheat)).